Consider the following 157-residue polypeptide: Transcription elongation factor GreA (157 aa).

A coiled-coil region spans residues Met-1–Val-75.

This sequence belongs to the GreA/GreB family.

Necessary for efficient RNA polymerase transcription elongation past template-encoded arresting sites. The arresting sites in DNA have the property of trapping a certain fraction of elongating RNA polymerases that pass through, resulting in locked ternary complexes. Cleavage of the nascent transcript by cleavage factors such as GreA or GreB allows the resumption of elongation from the new 3'terminus. GreA releases sequences of 2 to 3 nucleotides. The protein is Transcription elongation factor GreA of Mycoplasma mycoides subsp. mycoides SC (strain CCUG 32753 / NCTC 10114 / PG1).